The primary structure comprises 436 residues: Adenylosuccinate synthetase (436 aa).

GTP contacts are provided by residues 12–18 and 40–42; these read GDEGKGK and GHT. The active-site Proton acceptor is the D13. Mg(2+) is bound by residues D13 and G40. Residues 13-16, 38-41, T130, R144, Q230, T245, and R309 each bind IMP; these read DEGK and NAGH. The active-site Proton donor is the H41. 305 to 311 is a binding site for substrate; sequence TTTGRPR. Residues R311, 337 to 339, and 419 to 421 each bind GTP; these read KLD and SVG.

This sequence belongs to the adenylosuccinate synthetase family. In terms of assembly, homodimer. Mg(2+) serves as cofactor.

It is found in the cytoplasm. It catalyses the reaction IMP + L-aspartate + GTP = N(6)-(1,2-dicarboxyethyl)-AMP + GDP + phosphate + 2 H(+). Its pathway is purine metabolism; AMP biosynthesis via de novo pathway; AMP from IMP: step 1/2. Plays an important role in the de novo pathway of purine nucleotide biosynthesis. Catalyzes the first committed step in the biosynthesis of AMP from IMP. This is Adenylosuccinate synthetase from Myxococcus xanthus (strain DK1622).